The following is a 93-amino-acid chain: UPF0473 protein YrzB (93 aa).

The protein belongs to the UPF0473 family.

The sequence is that of UPF0473 protein YrzB (yrzB) from Bacillus subtilis (strain 168).